We begin with the raw amino-acid sequence, 259 residues long: Caffeoyl-CoA O-methyltransferase 1 (259 aa).

The segment covering 1–14 has biased composition (low complexity); sequence MATTTTEATKTSST. Residues 1–29 are disordered; it reads MATTTTEATKTSSTNGEDQKQSQNLRHQE. N-acetylalanine is present on Ala2. Lys33 contacts substrate. S-adenosyl-L-methionine is bound by residues Thr75, Glu97, 99 to 100, Ser105, Asp123, and Ala152; that span reads GV. Asp175 contributes to the substrate binding site. Residue Asp175 coordinates a divalent metal cation. Asp177 provides a ligand contact to S-adenosyl-L-methionine. Positions 201 and 202 each coordinate a divalent metal cation. Asn206 lines the substrate pocket.

It belongs to the class I-like SAM-binding methyltransferase superfamily. Cation-dependent O-methyltransferase family. CCoAMT subfamily. A divalent metal cation is required as a cofactor. In terms of tissue distribution, expressed in stems and roots. Detected in leaves, siliques, flower buds, flowers. Expressed in the tapetum, but not in the endothecium. Detected in the vascular system of leaves and all flower organs, including stigma, stamens, petals and sepals.

It carries out the reaction (E)-caffeoyl-CoA + S-adenosyl-L-methionine = (E)-feruloyl-CoA + S-adenosyl-L-homocysteine + H(+). The protein operates within aromatic compound metabolism; phenylpropanoid biosynthesis. Methylates caffeoyl-CoA to feruloyl-CoA. Has a very low activity with caffeic acid and esculetin. Involved in scopoletin biosynthesis in roots. This is Caffeoyl-CoA O-methyltransferase 1 (CCOAOMT1) from Arabidopsis thaliana (Mouse-ear cress).